Here is a 488-residue protein sequence, read N- to C-terminus: Beta-xylosidase (488 aa).

The active-site Proton donor is Glu-163. Glu-275 (nucleophile) is an active-site residue.

The protein belongs to the glycosyl hydrolase 39 family.

The catalysed reaction is Hydrolysis of (1-&gt;4)-beta-D-xylans, to remove successive D-xylose residues from the non-reducing termini.. Its function is as follows. Beta-xylosidase is an intracellular xylan-degrading enzyme. This chain is Beta-xylosidase (xynB), found in Caldicellulosiruptor saccharolyticus (Caldocellum saccharolyticum).